The sequence spans 417 residues: 4-hydroxy-3-methylbut-2-en-1-yl diphosphate synthase (flavodoxin) (417 aa).

[4Fe-4S] cluster is bound by residues Cys-303, Cys-306, Cys-349, and Glu-356.

It belongs to the IspG family. [4Fe-4S] cluster serves as cofactor.

It catalyses the reaction (2E)-4-hydroxy-3-methylbut-2-enyl diphosphate + oxidized [flavodoxin] + H2O + 2 H(+) = 2-C-methyl-D-erythritol 2,4-cyclic diphosphate + reduced [flavodoxin]. The protein operates within isoprenoid biosynthesis; isopentenyl diphosphate biosynthesis via DXP pathway; isopentenyl diphosphate from 1-deoxy-D-xylulose 5-phosphate: step 5/6. Converts 2C-methyl-D-erythritol 2,4-cyclodiphosphate (ME-2,4cPP) into 1-hydroxy-2-methyl-2-(E)-butenyl 4-diphosphate. In Mesorhizobium japonicum (strain LMG 29417 / CECT 9101 / MAFF 303099) (Mesorhizobium loti (strain MAFF 303099)), this protein is 4-hydroxy-3-methylbut-2-en-1-yl diphosphate synthase (flavodoxin).